We begin with the raw amino-acid sequence, 283 residues long: S-methyl-5'-thioadenosine phosphorylase (283 aa).

Thr18 lines the phosphate pocket. Lys51 is subject to N6-acetyllysine. Residues 60–61 and 93–94 each bind phosphate; these read RH and TA. Met196 serves as a coordination point for substrate. Position 197 (Thr197) interacts with phosphate. 220-222 is a substrate binding site; that stretch reads DYD.

It belongs to the PNP/MTAP phosphorylase family. MTAP subfamily. Homotrimer.

The protein resides in the cytoplasm. Its subcellular location is the nucleus. It carries out the reaction S-methyl-5'-thioadenosine + phosphate = 5-(methylsulfanyl)-alpha-D-ribose 1-phosphate + adenine. It participates in amino-acid biosynthesis; L-methionine biosynthesis via salvage pathway; S-methyl-5-thio-alpha-D-ribose 1-phosphate from S-methyl-5'-thioadenosine (phosphorylase route): step 1/1. Its function is as follows. Catalyzes the reversible phosphorylation of S-methyl-5'-thioadenosine (MTA) to adenine and 5-methylthioribose-1-phosphate. Involved in the breakdown of MTA, a major by-product of polyamine biosynthesis. Responsible for the first step in the methionine salvage pathway after MTA has been generated from S-adenosylmethionine. Has broad substrate specificity with 6-aminopurine nucleosides as preferred substrates. The protein is S-methyl-5'-thioadenosine phosphorylase of Bos taurus (Bovine).